We begin with the raw amino-acid sequence, 221 residues long: Ribonuclease T (221 aa).

An Exonuclease domain is found at 21 to 195 (VVVDVETAGF…YDAEKTADLF (175 aa)). Mg(2+) contacts are provided by aspartate 24, glutamate 26, histidine 182, and aspartate 187. Catalysis depends on histidine 182, which acts as the Proton donor/acceptor.

It belongs to the RNase T family. As to quaternary structure, homodimer. It depends on Mg(2+) as a cofactor.

In terms of biological role, trims short 3' overhangs of a variety of RNA species, leaving a one or two nucleotide 3' overhang. Responsible for the end-turnover of tRNA: specifically removes the terminal AMP residue from uncharged tRNA (tRNA-C-C-A). Also appears to be involved in tRNA biosynthesis. This chain is Ribonuclease T, found in Marinobacter nauticus (strain ATCC 700491 / DSM 11845 / VT8) (Marinobacter aquaeolei).